The following is a 206-amino-acid chain: MATGVMLCAARALRPRSWIPGTCQAHVRHTHQRASLLAFWDLIPMRAEPLRKKKKVDPRKDQAAKDRLKKRIRKLEKASQELIPIEDFITPVRFLDKSRQRPQEEHSPEESERRALLLKRWALFKQQEHEMERDAIRSMLEAQQEALEELKLESAELYAEAIKRDTSLFPFEKEGPHYTPPISNYQAPEGRYNDITKVYTQVEFKR.

Residues 1-46 constitute a mitochondrion transit peptide; it reads MATGVMLCAARALRPRSWIPGTCQAHVRHTHQRASLLAFWDLIPMR. The interval 170–189 is disordered; the sequence is PFEKEGPHYTPPISNYQAPE.

The protein belongs to the mitochondrion-specific ribosomal protein mL40 family. Component of the mitochondrial ribosome large subunit (39S) which comprises a 16S rRNA and about 50 distinct proteins. Ubiquitous.

The protein localises to the mitochondrion. In Mus musculus (Mouse), this protein is Large ribosomal subunit protein mL40 (Mrpl40).